Reading from the N-terminus, the 357-residue chain is DnaJ homolog subfamily C member 25 (357 aa).

Residues 19 to 39 traverse the membrane as a helical segment; it reads WLLLAPLLLVPLLARPAEALV. One can recognise a J domain in the interval 48–121; it reads DCYEVLGVSR…ETRKDYDYML (74 aa). The next 2 helical transmembrane spans lie at 147-167 and 241-261; these read VVIL…WWNS and LLLF…AWYC.

It belongs to the DNAJC25 family.

It localises to the membrane. This is DnaJ homolog subfamily C member 25 (Dnajc25) from Mus musculus (Mouse).